The following is a 156-amino-acid chain: MNINATLIGQSVAFLIFVLFCMKYVWPPVITALQERQKKIADGLDAANRAARDLELAQEKAGQQLREAKAQAAEIIEQSKKRAAQLVDEAREQARVEADRVKAQALAEIEQELNSAKDALRAQVGALAVGGAEKILGATIDQNAHAELVNKLAAEI.

A helical transmembrane segment spans residues 12-32 (VAFLIFVLFCMKYVWPPVITA).

It belongs to the ATPase B chain family. In terms of assembly, F-type ATPases have 2 components, F(1) - the catalytic core - and F(0) - the membrane proton channel. F(1) has five subunits: alpha(3), beta(3), gamma(1), delta(1), epsilon(1). F(0) has three main subunits: a(1), b(2) and c(10-14). The alpha and beta chains form an alternating ring which encloses part of the gamma chain. F(1) is attached to F(0) by a central stalk formed by the gamma and epsilon chains, while a peripheral stalk is formed by the delta and b chains.

It is found in the cell inner membrane. Its function is as follows. F(1)F(0) ATP synthase produces ATP from ADP in the presence of a proton or sodium gradient. F-type ATPases consist of two structural domains, F(1) containing the extramembraneous catalytic core and F(0) containing the membrane proton channel, linked together by a central stalk and a peripheral stalk. During catalysis, ATP synthesis in the catalytic domain of F(1) is coupled via a rotary mechanism of the central stalk subunits to proton translocation. Functionally, component of the F(0) channel, it forms part of the peripheral stalk, linking F(1) to F(0). This is ATP synthase subunit b from Pseudomonas putida (strain ATCC 47054 / DSM 6125 / CFBP 8728 / NCIMB 11950 / KT2440).